Consider the following 503-residue polypeptide: Probable folate-biopterin transporter 6 (503 aa).

12 helical membrane passes run 56–76 (SFVLGVVLVYGVNQGFSGSIF), 101–121 (LYYIPWVMRPIWGLFTDVFPI), 128–148 (PYFVVSGVLGLVSAIAIVVLG), 153–173 (ALALSCLLGVSAAMAIADVVI), 194–214 (LCMVCSSAGALVGYATSGVFV), 221–241 (GALGVLAFSPATIVILGFFIY), 281–301 (LYMFISLALNISTHEGHFYWY), 314–334 (FVGIIYAVGALASMFGVLIYH), 344–364 (NILFFAQLLYVFSGMLDLVFI), 369–389 (LTLGIPDSLFVITEESFTKMI), 404–424 (LCPLGIEGTFFAFLMCIDSFG), and 450–470 (WLVILIRNILRLVTVCFVFLV).

This sequence belongs to the major facilitator superfamily. Folate-biopterin transporter (TC 2.A.71) family.

The protein localises to the membrane. Its function is as follows. Could mediate folate transport. In Arabidopsis thaliana (Mouse-ear cress), this protein is Probable folate-biopterin transporter 6.